The following is a 1143-amino-acid chain: DNA polymerase II large subunit (1143 aa).

Belongs to the archaeal DNA polymerase II family. As to quaternary structure, heterodimer of a large subunit and a small subunit.

The catalysed reaction is DNA(n) + a 2'-deoxyribonucleoside 5'-triphosphate = DNA(n+1) + diphosphate. It carries out the reaction Exonucleolytic cleavage in the 3'- to 5'-direction to yield nucleoside 5'-phosphates.. Its function is as follows. Possesses two activities: a DNA synthesis (polymerase) and an exonucleolytic activity that degrades single-stranded DNA in the 3'- to 5'-direction. Has a template-primer preference which is characteristic of a replicative DNA polymerase. In Archaeoglobus fulgidus (strain ATCC 49558 / DSM 4304 / JCM 9628 / NBRC 100126 / VC-16), this protein is DNA polymerase II large subunit (polC).